The primary structure comprises 595 residues: Protein LUTEIN DEFICIENT 5, chloroplastic (595 aa).

Residues Met-1–Val-28 constitute a chloroplast transit peptide. Residue Cys-516 participates in heme binding.

The protein belongs to the cytochrome P450 family. Requires heme as cofactor.

Its subcellular location is the plastid. The protein localises to the chloroplast. Functionally, heme-containing cytochrome P450 involved in the biosynthesis of xanthophylls. Specific for beta-ring hydroxylation of alpha- and beta-carotene. Also has a low activity toward the epsilon-rings of alpha-carotene. The beta-ring of alpha-carotene is the preferred substrate in planta. This is Protein LUTEIN DEFICIENT 5, chloroplastic (CYP97A3) from Arabidopsis thaliana (Mouse-ear cress).